A 590-amino-acid polypeptide reads, in one-letter code: Arginine--tRNA ligase (590 aa).

The 'HIGH' region motif lies at Pro132–His142.

This sequence belongs to the class-I aminoacyl-tRNA synthetase family. In terms of assembly, monomer.

It is found in the cytoplasm. It catalyses the reaction tRNA(Arg) + L-arginine + ATP = L-arginyl-tRNA(Arg) + AMP + diphosphate. In Treponema denticola (strain ATCC 35405 / DSM 14222 / CIP 103919 / JCM 8153 / KCTC 15104), this protein is Arginine--tRNA ligase.